A 351-amino-acid polypeptide reads, in one-letter code: MNPPKSAPDAQGLSYRDAGVDIDAGDALVDKIKPFAKKTLRDGVLGGIGGFGALFEVPKKYKEPVLVSGTDGVGTKLKLAFHLNKHDTVGQDLVAMSVNDILVQGAEPLFFLDYFACGKLDVDTAATVVKGIAQGCELSGCALIGGETAEMPGMYPDGEYDLAGFAVGAVEKSKIIDGSTIAEGDVVLGLASSGIHSNGFSLVRKIIERANPDLSADFHGRSLADALMAPTRIYVKPLLALMQKIAVKGMAHITGGGLVENIPRVLREGLTAELDQKAWPLPPLFKWLQEHGGVADAEMHRVFNCGIGMAVIVSAADADAAVSDLTAAGEQVWKIGTVRASREGEAQTVVV.

It belongs to the AIR synthase family.

The protein localises to the cytoplasm. It catalyses the reaction 2-formamido-N(1)-(5-O-phospho-beta-D-ribosyl)acetamidine + ATP = 5-amino-1-(5-phospho-beta-D-ribosyl)imidazole + ADP + phosphate + H(+). It functions in the pathway purine metabolism; IMP biosynthesis via de novo pathway; 5-amino-1-(5-phospho-D-ribosyl)imidazole from N(2)-formyl-N(1)-(5-phospho-D-ribosyl)glycinamide: step 2/2. This Burkholderia multivorans (strain ATCC 17616 / 249) protein is Phosphoribosylformylglycinamidine cyclo-ligase.